A 435-amino-acid polypeptide reads, in one-letter code: MMEESGIESTPPATPPPPSTVVASPPPLTSGATRPQTVPSPSGISAFTPGDFSSPVPSVALTSTLPPMQSSVPPLPLSSISSPLGLSGPYGIPSASFASPAAGPPLSTGPPLGPVLSAPPMGPPTTGFSVSGGYDITRGHAGRTPQTPLMPSFSSASPMPGIVTNPMMQQPVSGGLDVSSPITFPEDVEDPRVTPDSNAPGGLWGFIKGVAGNPMVKTVLDKTKHSVESMITTLDPGMAPYIKSGGDVDIVVTSDKEVKVAAVRDAFQEVFGLAMVTGEAGQSNIAPQPVGYAAGVKGAQERIDSLRRAAVIHEKQPVVSVENFIAELFPDKWFDIGCLILDDPGYGIHIETFTQATPVALEHVQQAQSLTPPDYNLRWSGLLVTVGEVLERNVPNVSRTDWHQAFTGMSRRQMIYSAAKALAGMYKLRLPSRTV.

Disordered stretches follow at residues 1–54 and 101–165; these read MMEE…DFSS and AAGP…IVTN. Over residues 12–28 the composition is skewed to pro residues; the sequence is PATPPPPSTVVASPPPL. Polar residues-rich tracts occupy residues 30 to 45 and 144 to 157; these read SGAT…SGIS and TPQT…SSAS. The tract at residues 296-389 is required for interaction with PRKAR1A; that stretch reads VKGAQERIDS…SGLLVTVGEV (94 aa).

The protein belongs to the PRRC1 family. In terms of assembly, interacts with PRKAR1A; resulting in PKA activation. In terms of tissue distribution, expressed in the brain, heart, testis and ovary.

It is found in the golgi apparatus. It localises to the cytoplasm. In terms of biological role, acts as a regulator of the protein kinase A (PKA) during embryonic development. The sequence is that of Protein PRRC1 (prrc1) from Danio rerio (Zebrafish).